A 396-amino-acid polypeptide reads, in one-letter code: Probable sugar efflux transporter (396 aa).

The next 12 helical transmembrane spans lie at valine 15–leucine 35, valine 50–leucine 70, leucine 81–phenylalanine 101, valine 103–alanine 123, alanine 136–leucine 156, phenylalanine 170–leucine 190, proline 209–tyrosine 229, phenylalanine 246–glycine 266, alanine 275–alanine 295, isoleucine 299–methionine 319, valine 333–glycine 353, and methionine 364–phenylalanine 384.

It belongs to the major facilitator superfamily. SotB (TC 2.A.1.2) family.

The protein resides in the cell inner membrane. Functionally, involved in the efflux of sugars. The physiological role may be the reduction of the intracellular concentration of toxic sugars or sugar metabolites. This is Probable sugar efflux transporter from Escherichia coli O6:K15:H31 (strain 536 / UPEC).